Reading from the N-terminus, the 439-residue chain is Homeobox protein ceh-32 (439 aa).

Positions 183–243 (WDGEQKTHCF…KNRRQRDRAA (61 aa)) form a DNA-binding region, homeobox. Disordered regions lie at residues 253-293 (GVEL…SHIP), 344-365 (EEEN…KKRS), and 379-439 (VSPS…SQSE). 2 stretches are compositionally biased toward acidic residues: residues 264–274 (SDSDDDFEDSM) and 344–358 (EEEN…EADI). Residues 379–392 (VSPSQCSPCSNESL) are compositionally biased toward polar residues. The span at 398 to 428 (VKTEEVKKEDDEAAEEDSRSVKSETSEDPKH) shows a compositional bias: basic and acidic residues.

This sequence belongs to the SIX/Sine oculis homeobox family. Interacts with gmn-1. In terms of tissue distribution, expressed in the posterior gonad. Expressed in some cells in the head that are probably neurons. Expressed in the dorsal and ventral neuron RMD pair and the inner labial neuron class IL1. Not expressed in BAG neurons.

It is found in the nucleus. Its function is as follows. Transcription factor which binds a motif with the core sequence 5'-GTATCA-3'. Plays a role in head morphogenesis. Involved in embryonic development. Required for cell specification of the RIA interneurons. May cooperate with the transcription factor vab-3 and phosphatase eya-1 to repress transcription factor ets-5 expression in non BAG neuronal cells. This is Homeobox protein ceh-32 from Caenorhabditis elegans.